We begin with the raw amino-acid sequence, 387 residues long: Zinc transporter 7 (387 aa).

The Cytoplasmic portion of the chain corresponds to 1 to 37; that stretch reads MLPLSIKDDEYKPAKFNLVVKLSGWFRSILADKTSRN. Residues 38–58 form a helical membrane-spanning segment; that stretch reads LFFFLCLNLSFAFVELLYGIW. The Lumenal portion of the chain corresponds to 59–67; that stretch reads SNSLGLISD. A helical transmembrane segment spans residues 68–88; sequence SFHMFFDCTALLAGLAASVIS. The Cytoplasmic segment spans residues 89-102; it reads RWRSNDSFSYGYVR. A helical transmembrane segment spans residues 103 to 123; the sequence is AEVLAGFVNGLFLIFTAFFIF. At 124–140 the chain is on the lumenal side; sequence SEGVERALEPPDVHHDR. A helical membrane pass occupies residues 141 to 161; it reads LLPVSIAGLLVNLVGIFVFQH. Residues 161–232 form a his-rich loop region; sequence HGGHGHSHGG…HDDQHCHDDH (72 aa). Residues 162–247 lie on the Cytoplasmic side of the membrane; sequence GGHGHSHGGD…KGSSKQILQG (86 aa). The segment at 167–237 is disordered; the sequence is SHGGDDHGHS…CHDDHTLTPG (71 aa). The span at 187–201 shows a compositional bias: basic residues; the sequence is GHSHGGHGHSHGGHG. Composition is skewed to basic and acidic residues over residues 202–214 and 221–233; these read HSHE…DHGH and HSHD…DDHT. The helical transmembrane segment at 248 to 268 threads the bilayer; sequence VFLHIVADTLGSVGVIISAIL. The Lumenal portion of the chain corresponds to 269 to 273; that stretch reads MQKYD. Residues 274–294 traverse the membrane as a helical segment; it reads LMIADPICSMLIALLIGVSVV. Over 295-387 the chain is Cytoplasmic; the sequence is PLLRESIGIL…LYVQIEVAAM (93 aa).

The protein belongs to the cation diffusion facilitator (CDF) transporter (TC 2.A.4) family. SLC30A subfamily. In terms of assembly, homooligomer.

It is found in the golgi apparatus membrane. Its subcellular location is the cytoplasmic vesicle. The protein resides in the golgi apparatus. The protein localises to the trans-Golgi network. It localises to the sarcoplasmic reticulum. It is found in the mitochondrion. The catalysed reaction is Zn(2+)(in) = Zn(2+)(out). Zinc ion transporter mediating zinc entry from the cytosol into the lumen of organelles along the secretory pathway. By contributing to zinc ion homeostasis within the early secretory pathway, regulates the activation and folding of enzymes like alkaline phosphatases. In Danio rerio (Zebrafish), this protein is Zinc transporter 7 (slc30a7).